The chain runs to 190 residues: Elongation factor P-like protein (190 aa).

This sequence belongs to the elongation factor P family.

The chain is Elongation factor P-like protein from Yersinia pestis bv. Antiqua (strain Antiqua).